The sequence spans 208 residues: Redox-sensing transcriptional repressor Rex (208 aa).

The H-T-H motif DNA-binding region spans 15–54 (SYYMCLERLLDEGVEVVSSEELARRLDLKASQIRKDLSYF). 89–94 (GAGNIG) is a binding site for NAD(+).

The protein belongs to the transcriptional regulatory Rex family. Homodimer.

Its subcellular location is the cytoplasm. In terms of biological role, modulates transcription in response to changes in cellular NADH/NAD(+) redox state. This chain is Redox-sensing transcriptional repressor Rex, found in Thermotoga petrophila (strain ATCC BAA-488 / DSM 13995 / JCM 10881 / RKU-1).